The following is a 280-amino-acid chain: 3-deoxy-manno-octulosonate cytidylyltransferase (280 aa).

Belongs to the KdsB family.

Its subcellular location is the cytoplasm. It catalyses the reaction 3-deoxy-alpha-D-manno-oct-2-ulosonate + CTP = CMP-3-deoxy-beta-D-manno-octulosonate + diphosphate. It functions in the pathway nucleotide-sugar biosynthesis; CMP-3-deoxy-D-manno-octulosonate biosynthesis; CMP-3-deoxy-D-manno-octulosonate from 3-deoxy-D-manno-octulosonate and CTP: step 1/1. Its pathway is bacterial outer membrane biogenesis; lipopolysaccharide biosynthesis. Its function is as follows. Activates KDO (a required 8-carbon sugar) for incorporation into bacterial lipopolysaccharide in Gram-negative bacteria. This chain is 3-deoxy-manno-octulosonate cytidylyltransferase, found in Colwellia psychrerythraea (strain 34H / ATCC BAA-681) (Vibrio psychroerythus).